The primary structure comprises 155 residues: Protein archease-like (155 aa).

3 residues coordinate Ca(2+): aspartate 26, aspartate 154, and isoleucine 155.

It belongs to the archease family.

Component of the tRNA-splicing ligase complex required to facilitate the enzymatic turnover of catalytic subunit RtcB (F16A11.2). The chain is Protein archease-like from Caenorhabditis elegans.